The chain runs to 228 residues: Probable 26S proteasome regulatory subunit p28 (228 aa).

ANK repeat units follow at residues 1–30 (MSNY…SLLL), 35–64 (DGRI…NVNL), 71–100 (SGWT…KPDL), 106–135 (QGVT…SVRI), 139–168 (FNQI…SAVN), and 173–203 (QGWT…EYDL).

In terms of assembly, interacts with RPT3.

Functionally, acts as a chaperone during the assembly of the 26S proteasome, specifically of the 19S regulatory complex (RC) and appears to have an overlapping role with RPN14. The polypeptide is Probable 26S proteasome regulatory subunit p28 (NAS6) (Saccharomyces cerevisiae (strain ATCC 204508 / S288c) (Baker's yeast)).